Reading from the N-terminus, the 714-residue chain is Cyclomaltodextrin glucanotransferase (714 aa).

An N-terminal signal peptide occupies residues 1-27 (MKSRYKRLTSLALSLSMALGISLPAWA). The interval 28 to 165 (SPDTSVDNKV…NIKVVIDFAP (138 aa)) is A1. Residues D54, N59, N60, G78, and D80 each coordinate Ca(2+). 127–128 (YW) is a substrate binding site. N166 contributes to the Ca(2+) binding site. Residues 166 to 229 (NHTSPADRDN…NLYDLADINH (64 aa)) form a b region. H167 lines the substrate pocket. I217 provides a ligand contact to Ca(2+). 220-223 (NLYD) serves as a coordination point for substrate. D226 is a binding site for Ca(2+). The segment at 230-434 (NNNAMDAYFK…LRKSNPAIAY (205 aa)) is A2. Substrate is bound at residue R254. D256 acts as the Nucleophile in catalysis. Residue 259-260 (KH) participates in substrate binding. Residue H260 participates in Ca(2+) binding. E285 serves as the catalytic Proton donor. H355, D399, and R403 together coordinate substrate. A c region spans residues 435-523 (GTTTERWVNN…GTAVWQYTAP (89 aa)). A d region spans residues 524 to 610 (ETSPAIGNVG…SNTFKSFNVL (87 aa)). In terms of domain architecture, IPT/TIG spans 527–607 (PAIGNVGPTM…GTASNTFKSF (81 aa)). The region spanning 609 to 714 (VLTGDQVTVR…VGTVTVDWQN (106 aa)) is the CBM20 domain. Positions 611 to 714 (TGDQVTVRFL…VGTVTVDWQN (104 aa)) are e.

Belongs to the glycosyl hydrolase 13 family. As to quaternary structure, monomer. It depends on Ca(2+) as a cofactor.

Its subcellular location is the secreted. The catalysed reaction is Cyclizes part of a (1-&gt;4)-alpha-D-glucan chain by formation of a (1-&gt;4)-alpha-D-glucosidic bond.. This is Cyclomaltodextrin glucanotransferase (cgtM) from Paenibacillus macerans (Bacillus macerans).